Here is a 131-residue protein sequence, read N- to C-terminus: Acanthoscurrin-2 (131 aa).

Lys130 bears the Lysine amide mark.

Expressed in hemocytes and secreted into the plasma following bacterial immune challenge.

The protein resides in the secreted. Functionally, antimicrobial protein. Strong activity against the Gram-negative bacterium E.coli SBS363 and yeast C.albicans. No detectable activity against the Gram-positive bacterium M.luteus. In Acanthoscurria gomesiana (Tarantula spider), this protein is Acanthoscurrin-2.